Consider the following 220-residue polypeptide: Adapter protein MecA (220 aa).

This sequence belongs to the MecA family. As to quaternary structure, homodimer.

Enables the recognition and targeting of unfolded and aggregated proteins to the ClpC protease or to other proteins involved in proteolysis. In Enterococcus faecalis (strain ATCC 700802 / V583), this protein is Adapter protein MecA.